A 148-amino-acid polypeptide reads, in one-letter code: Putative nickel-responsive regulator (148 aa).

The Ni(2+) site is built by His-88, His-99, His-101, and Cys-107.

Belongs to the transcriptional regulatory CopG/NikR family. The cofactor is Ni(2+).

Functionally, transcriptional regulator. This is Putative nickel-responsive regulator from Helicobacter acinonychis (strain Sheeba).